The primary structure comprises 338 residues: Ketol-acid reductoisomerase (NADP(+)) (338 aa).

Positions 1–181 constitute a KARI N-terminal Rossmann domain; the sequence is MKVFYDNDAD…GGTRAGVIET (181 aa). Residues 24–27, arginine 47, serine 50, serine 52, and 82–85 each bind NADP(+); these read YGSQ and DEGQ. The active site involves histidine 107. Glycine 133 is a binding site for NADP(+). The 146-residue stretch at 182 to 327 folds into the KARI C-terminal knotted domain; it reads SFREETETDL…SKLRSMMTWI (146 aa). Mg(2+) contacts are provided by aspartate 190, glutamate 194, glutamate 226, and glutamate 230. Serine 251 contributes to the substrate binding site.

Belongs to the ketol-acid reductoisomerase family. The cofactor is Mg(2+).

The catalysed reaction is (2R)-2,3-dihydroxy-3-methylbutanoate + NADP(+) = (2S)-2-acetolactate + NADPH + H(+). It catalyses the reaction (2R,3R)-2,3-dihydroxy-3-methylpentanoate + NADP(+) = (S)-2-ethyl-2-hydroxy-3-oxobutanoate + NADPH + H(+). The protein operates within amino-acid biosynthesis; L-isoleucine biosynthesis; L-isoleucine from 2-oxobutanoate: step 2/4. It participates in amino-acid biosynthesis; L-valine biosynthesis; L-valine from pyruvate: step 2/4. Its function is as follows. Involved in the biosynthesis of branched-chain amino acids (BCAA). Catalyzes an alkyl-migration followed by a ketol-acid reduction of (S)-2-acetolactate (S2AL) to yield (R)-2,3-dihydroxy-isovalerate. In the isomerase reaction, S2AL is rearranged via a Mg-dependent methyl migration to produce 3-hydroxy-3-methyl-2-ketobutyrate (HMKB). In the reductase reaction, this 2-ketoacid undergoes a metal-dependent reduction by NADPH to yield (R)-2,3-dihydroxy-isovalerate. The polypeptide is Ketol-acid reductoisomerase (NADP(+)) (Acidithiobacillus ferrooxidans (strain ATCC 23270 / DSM 14882 / CIP 104768 / NCIMB 8455) (Ferrobacillus ferrooxidans (strain ATCC 23270))).